A 553-amino-acid chain; its full sequence is Phosphomethylpyrimidine synthase (553 aa).

Substrate contacts are provided by residues Asn192, Met221, Tyr250, His286, 306-308, 347-350, and Glu386; these read SRG and DGLR. Residue His390 participates in Zn(2+) binding. Tyr413 provides a ligand contact to substrate. His454 is a Zn(2+) binding site. The [4Fe-4S] cluster site is built by Cys534, Cys537, and Cys542.

Belongs to the ThiC family. Homodimer. It depends on [4Fe-4S] cluster as a cofactor.

It carries out the reaction 5-amino-1-(5-phospho-beta-D-ribosyl)imidazole + S-adenosyl-L-methionine = 4-amino-2-methyl-5-(phosphooxymethyl)pyrimidine + CO + 5'-deoxyadenosine + formate + L-methionine + 3 H(+). It participates in cofactor biosynthesis; thiamine diphosphate biosynthesis. Catalyzes the synthesis of the hydroxymethylpyrimidine phosphate (HMP-P) moiety of thiamine from aminoimidazole ribotide (AIR) in a radical S-adenosyl-L-methionine (SAM)-dependent reaction. The chain is Phosphomethylpyrimidine synthase from Anaplasma marginale (strain St. Maries).